Consider the following 184-residue polypeptide: dCTP deaminase (184 aa).

Residues Lys107 to Arg112, Thr131 to Glu133, Gln152, Tyr166, and Gln176 contribute to the dCTP site. Glu133 serves as the catalytic Proton donor/acceptor.

It belongs to the dCTP deaminase family. Homotrimer.

The enzyme catalyses dCTP + H2O + H(+) = dUTP + NH4(+). It functions in the pathway pyrimidine metabolism; dUMP biosynthesis; dUMP from dCTP (dUTP route): step 1/2. In terms of biological role, catalyzes the deamination of dCTP to dUTP. The protein is dCTP deaminase of Gemmatimonas aurantiaca (strain DSM 14586 / JCM 11422 / NBRC 100505 / T-27).